A 656-amino-acid polypeptide reads, in one-letter code: Replication protein A 70 kDa DNA-binding subunit A (656 aa).

A DNA-binding region (OB) is located at residues 225–307 (AIKARVTAKG…NHLNNEWEIL (83 aa)). A C4-type zinc finger spans residues 516–542 (CPNMIGDRQCNKKVTKSTNGNWTCDKC).

It belongs to the replication factor A protein 1 family. Heterotrimer of RPA1, RPA2 and RPA3 (canonical replication protein A complex). Interacts with RPA2B. As to expression, expressed in root tips, roots, shoot apical meristem (SAM), young leaves, flag leaves and ears, and at lower levels in mature leaves.

It is found in the nucleus. Component of the replication protein A complex (RPA) required for DNA recombination, repair and replication. The activity of RPA is mediated by single-stranded DNA binding and protein interactions. Plays an essential role in meiotic and somatic DNA repair, but is dispensable for DNA replication and homologous recombination. Is essential for normal progression through meiosis in pollen mother cells. Is involved in repair of double-strand DNA breaks (DSBs) induced by genotoxic stresses. The polypeptide is Replication protein A 70 kDa DNA-binding subunit A (RPA1A) (Oryza sativa subsp. japonica (Rice)).